The sequence spans 433 residues: Vesicle-associated protein (433 aa).

2 repeat units span residues 112-122 (GGGIGGGLGGG) and 219-229 (GGGIGGGLGGG). Positions 112–350 (GGGIGGGLGG…GGIGGGLGGG (239 aa)) are 3 X 11 AA repeats of G-G-G-I-G-G-G-L-G-G-G. A Nuclear localization signal motif is present at residues 266–274 (VDGKKKGKG). Residues 340-350 (GGGIGGGLGGG) form repeat 3. 2 disordered regions span residues 366 to 389 (RVGG…DGDG) and 411 to 433 (HGKG…NVSG). A compositionally biased stretch (basic and acidic residues) spans 423–433 (DIERPDLNVSG).

In terms of tissue distribution, egg cortex.

It is found in the microsome membrane. It localises to the nucleus. Its subcellular location is the endoplasmic reticulum membrane. May function as a multidomain RNA-binding protein. May play a role in nuclear RNA processing and in early development. This chain is Vesicle-associated protein (VAP-1), found in Strongylocentrotus purpuratus (Purple sea urchin).